We begin with the raw amino-acid sequence, 476 residues long: Glycogen synthase (476 aa).

ADP-alpha-D-glucose is bound at residue lysine 15.

This sequence belongs to the glycosyltransferase 1 family. Bacterial/plant glycogen synthase subfamily.

The catalysed reaction is [(1-&gt;4)-alpha-D-glucosyl](n) + ADP-alpha-D-glucose = [(1-&gt;4)-alpha-D-glucosyl](n+1) + ADP + H(+). The protein operates within glycan biosynthesis; glycogen biosynthesis. Its function is as follows. Synthesizes alpha-1,4-glucan chains using ADP-glucose. In Bacillus cereus (strain ATCC 14579 / DSM 31 / CCUG 7414 / JCM 2152 / NBRC 15305 / NCIMB 9373 / NCTC 2599 / NRRL B-3711), this protein is Glycogen synthase.